A 647-amino-acid chain; its full sequence is TNFAIP3-interacting protein 1 (647 aa).

Residues 39–72 (MQGIKMLGELLEESQMEASRLRQKAEELVKDSEL) are a coiled coil. Residues 61 to 71 (QKAEELVKDSE) show a composition bias toward basic and acidic residues. The interval 61–168 (QKAEELVKDS…DLGPPPPEDS (108 aa)) is disordered. Residue S77 is modified to Phosphoserine. The segment at 95–425 (TKVQVHPATS…SPLTRQREYQ (331 aa)) is interaction with Nef. The span at 102 to 115 (ATSTAATTTATATT) shows a compositional bias: low complexity. Positions 143-155 (EEQNSPETGSHPT) are enriched in polar residues. A coiled-coil region spans residues 209–270 (SKVHKNEQRT…KKLLMNSSCK (62 aa)). Residues S297, S416, and S455 each carry the phosphoserine modification. The stretch at 311 to 551 (AAEKKVKLLE…KASGERYHME (241 aa)) forms a coiled coil. A required for inhibitory activity of TNF-induced NF-kappa-B activation region spans residues 444-601 (ASPSSPPAAF…MEHPPPHPNS (158 aa)). The segment at 465–523 (KQELVTQNELLKQQVKIFEEDFQRERSDRERMNEEKEELKKQVEKLQAQVTLTNAQLKT) is ubiquitin-binding domain (UBD). The Nuclear localization signal signature appears at 537–543 (QKRKAKA). Y565 bears the Phosphotyrosine mark. The residue at position 584 (R584) is an Asymmetric dimethylarginine. Position 612 is an asymmetric dimethylarginine; alternate (R612). Position 612 is an omega-N-methylarginine; alternate (R612). Positions 613–647 (PPCAGIRNQSSQVMDPPPDRPAEPESADNDCDGPQ) are disordered. Over residues 637–647 (ESADNDCDGPQ) the composition is skewed to acidic residues. S638 is modified (phosphoserine).

Interacts with TNFAIP3 and IKBKG (polyubiquitinated); facilitates TNFAIP3-mediated de-ubiquitination of NEMO/IKBKG. Interacts with polyubiquitin. Interacts with MAPK1, SELPLG and PIK3CD. Interacts with IRAK1 (polyubiquitinated). Interacts with MYD88; the interaction is indicative for participation in an activated TLR-signaling complex. Interacts with TAX1BP1. In terms of processing, phosphorylation at Tyr-565 by SRC-family kinases recruits phosphoinositide-3-kinase (PI3K) PIK3CD:p85 heterodimer which results in integrin activation and leukocyte adhesion to activated endothelium during inflammation. Ubiquitous. Abundant in heart and skeletal muscle and expressed at lower levels in thymus, liver, kidney, brain and intestinal tract.

It localises to the cytoplasm. It is found in the nucleus. In terms of biological role, inhibits NF-kappa-B activation and TNF-induced NF-kappa-B-dependent gene expression by regulating TAX1BP1 and A20/TNFAIP3-mediated deubiquitination of IKBKG; proposed to link A20/TNFAIP3 to ubiquitinated IKBKG. Involved in regulation of EGF-induced ERK1/ERK2 signaling pathway; blocks MAPK3/MAPK1 nuclear translocation and MAPK1-dependent transcription. Increases cell surface CD4(T4) antigen expression. Involved in the anti-inflammatory response of macrophages and positively regulates TLR-induced activation of CEBPB. Involved in the prevention of autoimmunity; this function implicates binding to polyubiquitin. Involved in leukocyte integrin activation during inflammation; this function is mediated by association with SELPLG and dependent on phosphorylation by SRC-family kinases. This is TNFAIP3-interacting protein 1 (Tnip1) from Mus musculus (Mouse).